Consider the following 88-residue polypeptide: Small ribosomal subunit protein bS16 (88 aa).

It belongs to the bacterial ribosomal protein bS16 family.

This Geotalea uraniireducens (strain Rf4) (Geobacter uraniireducens) protein is Small ribosomal subunit protein bS16.